Consider the following 539-residue polypeptide: Fusion glycoprotein F0 (539 aa).

An N-terminal signal peptide occupies residues 1-18; that stretch reads MSWKVVIIFSLLITPQHG. 7 cysteine pairs are disulfide-bonded: Cys28-Cys407, Cys60-Cys182, Cys283-Cys311, Cys292-Cys301, Cys326-Cys335, Cys350-Cys361, and Cys384-Cys390. Asn57 carries N-linked (GlcNAc...) asparagine; by host glycosylation. Residues 103–127 form a fusion peptide region; the sequence is FVLGAIALGVATAAAVTAGVAIAKT. A glycan (N-linked (GlcNAc...) asparagine; by host) is linked at Asn172. The Cell attachment site signature appears at 329 to 331; sequence RGD. N-linked (GlcNAc...) asparagine; by host glycosylation is present at Asn353. A helical membrane pass occupies residues 492–512; sequence IIVIILIAVLGSSMILVSIFI. Residues 520-539 are disordered; that stretch reads PTGAPPELSGVTNNGFIPHS. Residues 529-539 show a composition bias toward polar residues; it reads GVTNNGFIPHS.

Belongs to the paramyxoviruses fusion glycoprotein family. Homotrimer. Heterodimer with fusion protein F2; disulfide-linked. As a heterodimer with F2, interacts with host heparan sulfate. As a heterodimer with F2, interacts with host integrin ITGAV/ITGB1. Part of a complex composed of F1, F2 and G glycoproteins. In terms of assembly, homotrimer. Heterodimer with fusion protein F1; disulfide-linked. As a heterodimer with F1, interacts with host heparan sulfate. As a heterodimer with F2, interacts with host integrin ITGAV/ITGB1. Part of a complex composed of F1, F2 and G glycoproteins. In terms of processing, the F glycoprotein is synthesized as a F0 inactive precursor that is heavily N-glycosylated and processed.

The protein localises to the virion membrane. It is found in the host cell membrane. Its function is as follows. Inactive precursor that is cleaved to give rise to the mature F1 and F2 fusion glycoproteins. In terms of biological role, class I viral fusion protein. Under the current model, the protein has at least 3 conformational states: pre-fusion native state, pre-hairpin intermediate state, and post-fusion hairpin state. During viral and plasma cell membrane fusion, the coiled coil regions assume a trimer-of-hairpins structure, positioning the fusion peptide in close proximity to the C-terminal region of the ectodomain. The formation of this structure appears to drive apposition and subsequent fusion of viral and cellular membranes leading to delivery of the nucleocapsid into the cytoplasm. This fusion is pH independent and occurs at the plasma or endosomal membrane. The trimer of F1-F2 (F protein) also facilitates the attachment to host cell by binding to host heparan sulfate. Major determinant of the species specificity of RSV infection. The trimer of F1-F2 (F protein) also facilitates the attachment to host cell by binding to host heparan sulfate. In Human metapneumovirus (strain CAN97-83) (HMPV), this protein is Fusion glycoprotein F0 (F).